The primary structure comprises 642 residues: tRNA uridine 5-carboxymethylaminomethyl modification enzyme MnmG (642 aa).

FAD is bound by residues 10–15 (GAGHAG), Val122, and Ser177. An NAD(+)-binding site is contributed by 269–283 (SARYCPSLEDKVMRF). Position 366 (Gln366) interacts with FAD.

It belongs to the MnmG family. In terms of assembly, homodimer. Heterotetramer of two MnmE and two MnmG subunits. FAD serves as cofactor.

The protein localises to the cytoplasm. In terms of biological role, NAD-binding protein involved in the addition of a carboxymethylaminomethyl (cmnm) group at the wobble position (U34) of certain tRNAs, forming tRNA-cmnm(5)s(2)U34. The polypeptide is tRNA uridine 5-carboxymethylaminomethyl modification enzyme MnmG (Syntrophobacter fumaroxidans (strain DSM 10017 / MPOB)).